The chain runs to 361 residues: Phosphoserine aminotransferase (361 aa).

Residue Arg43 coordinates L-glutamate. Pyridoxal 5'-phosphate is bound by residues 77-78 (AS), Trp103, Thr153, Asp173, and Gln196. N6-(pyridoxal phosphate)lysine is present on Lys197. 238–239 (NT) serves as a coordination point for pyridoxal 5'-phosphate.

The protein belongs to the class-V pyridoxal-phosphate-dependent aminotransferase family. SerC subfamily. As to quaternary structure, homodimer. It depends on pyridoxal 5'-phosphate as a cofactor.

The protein localises to the cytoplasm. It carries out the reaction O-phospho-L-serine + 2-oxoglutarate = 3-phosphooxypyruvate + L-glutamate. The catalysed reaction is 4-(phosphooxy)-L-threonine + 2-oxoglutarate = (R)-3-hydroxy-2-oxo-4-phosphooxybutanoate + L-glutamate. The protein operates within amino-acid biosynthesis; L-serine biosynthesis; L-serine from 3-phospho-D-glycerate: step 2/3. It participates in cofactor biosynthesis; pyridoxine 5'-phosphate biosynthesis; pyridoxine 5'-phosphate from D-erythrose 4-phosphate: step 3/5. Catalyzes the reversible conversion of 3-phosphohydroxypyruvate to phosphoserine and of 3-hydroxy-2-oxo-4-phosphonooxybutanoate to phosphohydroxythreonine. This is Phosphoserine aminotransferase from Pseudomonas syringae pv. syringae (strain B728a).